The primary structure comprises 576 residues: MTSKISTTYEEEGRQSKIQPRAFVITRSGPSSKSSSFSARQSYASSRQSITPGVYQQLSSSGITDFRGTREKEKREMQNLNERLASYIEKVHFLDAQVKKLEAENEALRNRKSESLQPIRDAYENELAQARKVIDELSSTKGVSEAKVAGLQDEIASLRELIVTYENQSKDYRKKIESLGNQIGEYEGELHTLRIRCGSLEDENAKVRELLDKIQEQNRRLRADLDTETAAHIEADCLAQTKTEEAEFYKDLLDQLELLKPEPIQIKGMDYAEFWKSELSKCVREIQSAYDEKIDMIQQDTEAKYSAQLNSLRSGNVKDGMQLQHVQEEVKKLRTQAGEKNAMYAELAAKFASLQAERDSIGRQCSELERELEELRIKYNQDIGDLSNELSAVLAQLQILTDAKITMELEIACYRKLLEGEESRVGLRSLVEQAIGVQGRGTASLKDTIQQSTSSGSMTIQRSSKGPIAFNSVDQSGSNIVIENTTSGARAKTQSLRGWRIDKTVAGRVAASIQLKDYEIPPNTKYTIWAKGAKDRATADNEQIADIFSLGVGSCTWTIVDEAGNEKATLIAKFSG.

The disordered stretch occupies residues 1 to 51 (MTSKISTTYEEEGRQSKIQPRAFVITRSGPSSKSSSFSARQSYASSRQSIT). A head region spans residues 2–75 (TSKISTTYEE…FRGTREKEKR (74 aa)). The span at 28 to 49 (SGPSSKSSSFSARQSYASSRQS) shows a compositional bias: low complexity. The IF rod domain maps to 73-425 (EKREMQNLNE…KLLEGEESRV (353 aa)). The coil 1A stretch occupies residues 76–108 (EMQNLNERLASYIEKVHFLDAQVKKLEAENEAL). Positions 109–122 (RNRKSESLQPIRDA) are linker 1. Residues 123 to 260 (YENELAQARK…DLLDQLELLK (138 aa)) form a coil 1B region. The linker 2 stretch occupies residues 261-278 (PEPIQIKGMDYAEFWKSE). Residues 279 to 425 (LSKCVREIQS…KLLEGEESRV (147 aa)) are coil 2. A tail region spans residues 426 to 576 (GLRSLVEQAI…KATLIAKFSG (151 aa)). Residues 456-574 (GSMTIQRSSK…NEKATLIAKF (119 aa)) form the LTD domain.

The protein belongs to the intermediate filament family. As to quaternary structure, can form homopolymers.

It localises to the cytoplasm. The protein is Non-neuronal cytoplasmic intermediate filament protein of Cornu aspersum (Brown garden snail).